A 227-amino-acid polypeptide reads, in one-letter code: Cytidylate kinase (227 aa).

Gly-12–Thr-20 contributes to the ATP binding site.

Belongs to the cytidylate kinase family. Type 1 subfamily.

The protein resides in the cytoplasm. The enzyme catalyses CMP + ATP = CDP + ADP. It catalyses the reaction dCMP + ATP = dCDP + ADP. This Shigella flexneri protein is Cytidylate kinase.